The following is an 84-amino-acid chain: RNA-binding protein Hfq (84 aa).

Residues 11 to 71 enclose the Sm domain; it reads DTFLNFVRKN…ISTIMPGAPI (61 aa).

The protein belongs to the Hfq family. As to quaternary structure, homohexamer.

RNA chaperone that binds small regulatory RNA (sRNAs) and mRNAs to facilitate mRNA translational regulation in response to envelope stress, environmental stress and changes in metabolite concentrations. Also binds with high specificity to tRNAs. In Beijerinckia indica subsp. indica (strain ATCC 9039 / DSM 1715 / NCIMB 8712), this protein is RNA-binding protein Hfq.